A 299-amino-acid chain; its full sequence is Diaminopimelate epimerase (299 aa).

Substrate-binding residues include Asn-15, Gln-47, and Asn-67. Catalysis depends on Cys-76, which acts as the Proton donor. Substrate-binding positions include 77 to 78 (GN), Asn-163, Asn-197, and 215 to 216 (ER). Cys-224 functions as the Proton acceptor in the catalytic mechanism. 225–226 (GS) provides a ligand contact to substrate.

The protein belongs to the diaminopimelate epimerase family. Homodimer.

The protein resides in the cytoplasm. It catalyses the reaction (2S,6S)-2,6-diaminopimelate = meso-2,6-diaminopimelate. The protein operates within amino-acid biosynthesis; L-lysine biosynthesis via DAP pathway; DL-2,6-diaminopimelate from LL-2,6-diaminopimelate: step 1/1. Its function is as follows. Catalyzes the stereoinversion of LL-2,6-diaminopimelate (L,L-DAP) to meso-diaminopimelate (meso-DAP), a precursor of L-lysine and an essential component of the bacterial peptidoglycan. This Agrobacterium fabrum (strain C58 / ATCC 33970) (Agrobacterium tumefaciens (strain C58)) protein is Diaminopimelate epimerase.